An 819-amino-acid chain; its full sequence is Protein EFR3 homolog A (819 aa).

4 positions are modified to phosphoserine: S360, S363, S420, and S692.

This sequence belongs to the EFR3 family. In terms of assembly, component of a phosphatidylinositol 4-kinase (PI4K) complex, composed of PI4KA, EFR3 (EFR3A or EFR3B), TTC7 (TTC7A or TTC7B) and HYCC (HYCC1 or HYCC2). Palmitoylated at its N-terminus, anchoring the protein to the plasma membrane. In terms of tissue distribution, widely expressed. Expressed in neurons of the superior olivary complex of the auditory brainstem. Also expressed at lower levels in the cochlear nucleus, the lateral leminiscal nuclei and the inferior collicus.

It is found in the cell membrane. The protein resides in the cytoplasm. The protein localises to the cytosol. In terms of biological role, component of a complex required to localize phosphatidylinositol 4-kinase (PI4K) to the plasma membrane. The complex acts as a regulator of phosphatidylinositol 4-phosphate (PtdIns(4)P) synthesis. In the complex, EFR3A probably acts as the membrane-anchoring component. Also involved in responsiveness to G-protein-coupled receptors; it is however unclear whether this role is direct or indirect. The chain is Protein EFR3 homolog A from Mus musculus (Mouse).